A 362-amino-acid chain; its full sequence is Nuclear hormone receptor family member nhr-77 (362 aa).

A DNA-binding region (nuclear receptor) is located at residues 8–82 (DPICPVCEFP…AGMKRNLVKQ (75 aa)). 2 NR C4-type zinc fingers span residues 11–32 (CPVCEFPSNVELHFGGLVCGAC) and 48–69 (CEKNNQCKGMRKNCRACRFDYC). Positions 145–362 (EAEKDVSKIL…KLYIQLGLPF (218 aa)) constitute an NR LBD domain.

Belongs to the nuclear hormone receptor family.

The protein localises to the nucleus. Functionally, orphan nuclear receptor. The sequence is that of Nuclear hormone receptor family member nhr-77 (nhr-77) from Caenorhabditis elegans.